The primary structure comprises 482 residues: BEL1-like homeodomain protein 7 (482 aa).

An SR/KY domain region spans residues 118-134 (SKYLKAAQELLDETVNV). A BELL domain region spans residues 167–238 (ERQELQSKLS…CLRDAISGQI (72 aa)). The homeobox DNA-binding region spans 285–347 (TWRPQRGLPD…NARVRLWKPM (63 aa)). Positions 358–401 (DALQENDPNQSSENTPEITEIQELQTESSSNNGHVPGVASSSMR) are disordered. Positions 363-401 (NDPNQSSENTPEITEIQELQTESSSNNGHVPGVASSSMR) are enriched in polar residues.

The protein belongs to the TALE/BELL homeobox family. May form heterodimeric complexes with TALE/KNOX proteins.

It localises to the nucleus. In Arabidopsis thaliana (Mouse-ear cress), this protein is BEL1-like homeodomain protein 7 (BLH7).